We begin with the raw amino-acid sequence, 383 residues long: Deoxyguanosinetriphosphate triphosphohydrolase-like protein (383 aa).

Residues 62–198 form the HD domain; it reads RLTHSLEVST…ASLADDISYI (137 aa).

The protein belongs to the dGTPase family. Type 2 subfamily.

This chain is Deoxyguanosinetriphosphate triphosphohydrolase-like protein, found in Rickettsia prowazekii (strain Madrid E).